Reading from the N-terminus, the 198-residue chain is MQIEISANSRKLHGTGANRRLRSQGRLPGVIYGGNGDAQSIELDHKDLYYKLKMEAFHASILSISIDGKKEQVLLRDVQMHPFKQQVLHIDFQRVRQDQKIHVKVPLHFINADIAPGVKLSGGMISHVATEIEISCLPKDLPEFITVDLSGMTAGSTLHLSDLILSENVEIPALLKGDNLPVATLIAKRGEAGESSEE.

This sequence belongs to the bacterial ribosomal protein bL25 family. CTC subfamily. Part of the 50S ribosomal subunit; part of the 5S rRNA/L5/L18/L25 subcomplex. Contacts the 5S rRNA. Binds to the 5S rRNA independently of L5 and L18.

This is one of the proteins that binds to the 5S RNA in the ribosome where it forms part of the central protuberance. This is Large ribosomal subunit protein bL25 from Nitrosomonas europaea (strain ATCC 19718 / CIP 103999 / KCTC 2705 / NBRC 14298).